Here is a 239-residue protein sequence, read N- to C-terminus: Ribonuclease 3 (239 aa).

In terms of domain architecture, RNase III spans 18 to 141; that stretch reads YLTLEKALGY…LMAGVYLEAG (124 aa). Glutamate 54 serves as a coordination point for Mg(2+). Aspartate 58 is an active-site residue. Positions 127 and 130 each coordinate Mg(2+). Residue glutamate 130 is part of the active site. In terms of domain architecture, DRBM spans 168-237; that stretch reads DYKTALQELT…AYQALQKLKE (70 aa).

It belongs to the ribonuclease III family. As to quaternary structure, homodimer. The cofactor is Mg(2+).

The protein localises to the cytoplasm. The enzyme catalyses Endonucleolytic cleavage to 5'-phosphomonoester.. Its function is as follows. Digests double-stranded RNA. Involved in the processing of primary rRNA transcript to yield the immediate precursors to the large and small rRNAs (23S and 16S). Processes some mRNAs, and tRNAs when they are encoded in the rRNA operon. Processes pre-crRNA and tracrRNA of type II CRISPR loci if present in the organism. The sequence is that of Ribonuclease 3 from Helicobacter pylori (strain P12).